The sequence spans 280 residues: Antiactivator FleN (280 aa).

ATP is bound by residues lysine 19–asparagine 26, glutamate 153, asparagine 181, proline 215–aspartate 217, and arginine 221.

This sequence belongs to the ParA family. As to quaternary structure, forms homodimers. Interacts with FleQ.

ATP-binding allows dimerization and subsequent antagonistic effect against FleQ. Its function is as follows. ATPase that plays an important role in maintaining flagellar number in Pseudomonas aeruginosa. Exhibits anti-activator activity against FleQ, the global transcriptional regulator of flagellar genes. The protein is Antiactivator FleN of Pseudomonas aeruginosa (strain ATCC 15692 / DSM 22644 / CIP 104116 / JCM 14847 / LMG 12228 / 1C / PRS 101 / PAO1).